The chain runs to 1438 residues: DNA polymerase III PolC-type (1438 aa).

In terms of domain architecture, Exonuclease spans 422-578 (YVVFDVETTG…YDTEATAYIF (157 aa)).

It belongs to the DNA polymerase type-C family. PolC subfamily.

The protein localises to the cytoplasm. The enzyme catalyses DNA(n) + a 2'-deoxyribonucleoside 5'-triphosphate = DNA(n+1) + diphosphate. Functionally, required for replicative DNA synthesis. This DNA polymerase also exhibits 3' to 5' exonuclease activity. In Staphylococcus aureus (strain Mu3 / ATCC 700698), this protein is DNA polymerase III PolC-type.